The following is a 113-amino-acid chain: MPPLTESEFLALADAELGRIERTVERAADEVDADIEIGRVGNVLTLEFDDGSKIIINSQTPMQELWVAARAGGFHFRRNDGRWVDTRSGEELYVALSRYVSQQSEVDVTLVAD.

It belongs to the frataxin family.

In terms of biological role, involved in iron-sulfur (Fe-S) cluster assembly. May act as a regulator of Fe-S biogenesis. The chain is Iron-sulfur cluster assembly protein CyaY from Ralstonia nicotianae (strain ATCC BAA-1114 / GMI1000) (Ralstonia solanacearum).